Here is a 451-residue protein sequence, read N- to C-terminus: MSIQSSEIIETIKMVADQNFDVRTITIGIDLHDCISADIDELNKNIYQKITTIGKDLVETAKILSAKYGIPIVNQRISVTPIAQIAAATKADSYVSIAQTLDRAAKAIGVSFIGGFSALVQKGMSPSDEVLIRSIPEAMQTTDIVCSSINIGSTRAGINMDAVKLAGETIKRTADITPEGFGCAKIVVFCNAVEDNPFMAGAFHGSGEADAIINVGVSGPGVVKEALENSNATTLTEVAEVVKKTAFKITRVGELIGQEASKMLNIPFGILDLSLAPTPAIGDSVARILETMGLSVCGTHGTTAALALLNDAVKKGGMMASSSVGGLSGAFIPVSEDEGMIAAAESGILTLDKLEAMTAVCSVGLDMIAVPGKTPAHTISGIIADEAAIGMINSKTTAVRIIPVTGKDIGESVEFGGLLGYAPIMPVKEGSCEVFVNRGGRIPAPVQSMKN.

Belongs to the UPF0210 family. Homodimer.

This Actinobacillus pleuropneumoniae serotype 5b (strain L20) protein is UPF0210 protein APL_1491.